The following is a 544-amino-acid chain: Terpene synthase 9 (544 aa).

3 residues coordinate Mg(2+): D296, D300, and E449. The DDXXD motif motif lies at 296 to 300 (DDTFD).

Belongs to the terpene synthase family. Tpsa subfamily. It depends on Mg(2+) as a cofactor. Requires Mn(2+) as cofactor.

The catalysed reaction is (2E,6E)-farnesyl diphosphate = (1E,4E)-germacrene B + diphosphate. It carries out the reaction (2E)-geranyl diphosphate = terpinolene + diphosphate. It catalyses the reaction (2E)-geranyl diphosphate = limonene + diphosphate. The enzyme catalyses (2E)-geranyl diphosphate = beta-myrcene + diphosphate. The catalysed reaction is (2Z,6Z)-farnesyl diphosphate = germacrene A + diphosphate. It carries out the reaction (2Z,6Z)-farnesyl diphosphate = alpha-humulene + diphosphate. It participates in secondary metabolite biosynthesis; terpenoid biosynthesis. Its function is as follows. Sesquiterpene synthase involved in the biosynthesis of volatile compounds. Mediates the conversion of (2E,6E)-farnesyl diphosphate (FPP) into (1E,4E)-germacrene B, but also smaller amounts of germacrene A and C, and of (2Z,6Z)-farnesyl diphosphate ((ZZ)-FPP) into alpha-humulene, germacrene A and germacrene B. Can act with a low efficiency as a monoterpene synthase with geranyl diphosphate (GPP) as substrate, thus producing beta-myrcene, limonene and terpinolene. This Solanum habrochaites (Wild tomato) protein is Terpene synthase 9.